The primary structure comprises 250 residues: tRNA (guanine-N(1)-)-methyltransferase (250 aa).

Residues glycine 113 and 133–138 (IGDYVL) each bind S-adenosyl-L-methionine.

It belongs to the RNA methyltransferase TrmD family. In terms of assembly, homodimer.

It localises to the cytoplasm. It carries out the reaction guanosine(37) in tRNA + S-adenosyl-L-methionine = N(1)-methylguanosine(37) in tRNA + S-adenosyl-L-homocysteine + H(+). Specifically methylates guanosine-37 in various tRNAs. In Photorhabdus laumondii subsp. laumondii (strain DSM 15139 / CIP 105565 / TT01) (Photorhabdus luminescens subsp. laumondii), this protein is tRNA (guanine-N(1)-)-methyltransferase.